Consider the following 44-residue polypeptide: Protein Tat (44 aa).

Residues 1-44 (APEDSQSHQVSLSKQPASQAGGDPTGPKESKKKVESETETDPVP) are disordered. Residues 7–18 (SHQVSLSKQPAS) show a composition bias toward polar residues. Residue K14 forms a Glycyl lysine isopeptide (Lys-Gly) (interchain with G-Cter in ubiquitin) linkage. Positions 21–23 (GGD) match the Cell attachment site motif. Residues 26–36 (GPKESKKKVES) are compositionally biased toward basic and acidic residues.

This sequence belongs to the lentiviruses Tat family. Interacts with host CCNT1. Associates with the P-TEFb complex composed at least of Tat, P-TEFb (CDK9 and CCNT1), TAR RNA, RNA Pol II. Recruits the HATs CREBBP, TAF1/TFIID, EP300, PCAF and GCN5L2. Interacts with host KAT5/Tip60; this interaction targets the latter to degradation. Interacts with the host deacetylase SIRT1. Interacts with host capping enzyme RNGTT; this interaction stimulates RNGTT. Binds to host KDR, and to the host integrins ITGAV/ITGB3 and ITGA5/ITGB1. Interacts with host KPNB1/importin beta-1 without previous binding to KPNA1/importin alpha-1. Interacts with EIF2AK2. Interacts with host nucleosome assembly protein NAP1L1; this interaction may be required for the transport of Tat within the nucleus, since the two proteins interact at the nuclear rim. Interacts with host C1QBP/SF2P32; this interaction involves lysine-acetylated Tat. Interacts with the host chemokine receptors CCR2, CCR3 and CXCR4. Interacts with host DPP4/CD26; this interaction may trigger an anti-proliferative effect. Interacts with host LDLR. Interacts with the host extracellular matrix metalloproteinase MMP1. Interacts with host PRMT6; this interaction mediates Tat's methylation. Interacts with, and is ubiquitinated by MDM2/Hdm2. Interacts with host PSMC3 and HTATIP2. Interacts with STAB1; this interaction may overcome SATB1-mediated repression of IL2 and IL2RA (interleukin) in T cells by binding to the same domain than HDAC1. Interacts (when acetylated) with human CDK13, thereby increasing HIV-1 mRNA splicing and promoting the production of the doubly spliced HIV-1 protein Nef. Acetylation by EP300, CREBBP, GCN5L2/GCN5 and PCAF regulates the transactivation activity of Tat. Post-translationally, phosphorylated by EIF2AK2 on serine and threonine residues adjacent to the basic region important for TAR RNA binding and function. Phosphorylation of Tat by EIF2AK2 is dependent on the prior activation of EIF2AK2 by dsRNA. In terms of processing, asymmetrical arginine methylation by host PRMT6 seems to diminish the transactivation capacity of Tat and affects the interaction with host CCNT1. Polyubiquitination by MDM2 does not target Tat to degradation, but activates its transactivation function and fosters interaction with CCNT1 and TAR RNA.

Its subcellular location is the host nucleus. The protein localises to the host nucleolus. The protein resides in the host cytoplasm. It is found in the secreted. In terms of biological role, transcriptional activator that increases RNA Pol II processivity, thereby increasing the level of full-length viral transcripts. Recognizes a hairpin structure at the 5'-LTR of the nascent viral mRNAs referred to as the transactivation responsive RNA element (TAR) and recruits the cyclin T1-CDK9 complex (P-TEFb complex) that will in turn hyperphosphorylate the RNA polymerase II to allow efficient elongation. The CDK9 component of P-TEFb and other Tat-activated kinases hyperphosphorylate the C-terminus of RNA Pol II that becomes stabilized and much more processive. Other factors such as HTATSF1/Tat-SF1, SUPT5H/SPT5, and HTATIP2 are also important for Tat's function. Besides its effect on RNA Pol II processivity, Tat induces chromatin remodeling of proviral genes by recruiting the histone acetyltransferases (HATs) CREBBP, EP300 and PCAF to the chromatin. This also contributes to the increase in proviral transcription rate, especially when the provirus integrates in transcriptionally silent region of the host genome. To ensure maximal activation of the LTR, Tat mediates nuclear translocation of NF-kappa-B by interacting with host RELA. Through its interaction with host TBP, Tat may also modulate transcription initiation. Tat can reactivate a latently infected cell by penetrating in it and transactivating its LTR promoter. In the cytoplasm, Tat is thought to act as a translational activator of HIV-1 mRNAs. Extracellular circulating Tat can be endocytosed by surrounding uninfected cells via the binding to several surface receptors such as CD26, CXCR4, heparan sulfate proteoglycans (HSPG) or LDLR. Neurons are rarely infected, but they internalize Tat via their LDLR. Endosomal low pH allows Tat to cross the endosome membrane to enter the cytosol and eventually further translocate into the nucleus, thereby inducing severe cell dysfunctions ranging from cell activation to cell death. Through its interaction with nuclear HATs, Tat is potentially able to control the acetylation-dependent cellular gene expression. Tat seems to inhibit the HAT activity of KAT5/Tip60 and TAF1, and consequently modify the expression of specific cellular genes. Modulates the expression of many cellular genes involved in cell survival, proliferation or in coding for cytokines (such as IL10) or cytokine receptors. May be involved in the derepression of host interleukin IL2 expression. Mediates the activation of cyclin-dependent kinases and dysregulation of microtubule network. Tat plays a role in T-cell and neurons apoptosis. Tat induced neurotoxicity and apoptosis probably contribute to neuroAIDS. Host extracellular matrix metalloproteinase MMP1 cleaves Tat and decreases Tat's mediated neurotoxicity. Circulating Tat also acts as a chemokine-like and/or growth factor-like molecule that binds to specific receptors on the surface of the cells, affecting many cellular pathways. In the vascular system, Tat binds to ITGAV/ITGB3 and ITGA5/ITGB1 integrins dimers at the surface of endothelial cells and competes with bFGF for heparin-binding sites, leading to an excess of soluble bFGF. Binds to KDR/VEGFR-2. All these Tat-mediated effects enhance angiogenesis in Kaposi's sarcoma lesions. In Human immunodeficiency virus type 1 group M subtype B (isolate BRVA) (HIV-1), this protein is Protein Tat.